A 44-amino-acid chain; its full sequence is Conotoxin Sr5.5 (44 aa).

A signal peptide spans 1 to 19 (MRCLPVFVILLLLIASAPS). A propeptide spanning residues 20-29 (VDDNAKGTQH) is cleaved from the precursor.

The protein belongs to the conotoxin T superfamily. Post-translationally, contains 2 disulfide bonds that can be either 'C1-C3, C2-C4' or 'C1-C4, C2-C3', since these disulfide connectivities have been observed for conotoxins with cysteine framework V (for examples, see AC P0DQQ7 and AC P81755). In terms of tissue distribution, expressed by the venom duct.

The protein localises to the secreted. The polypeptide is Conotoxin Sr5.5 (Conus spurius (Alphabet cone)).